Reading from the N-terminus, the 141-residue chain is Protein wingless (141 aa).

The O-palmitoleoyl serine; by PORCN moiety is linked to residue Ser-3. Residues 40 to 49 (TDLEAPTQRN) show a composition bias toward polar residues. Residues 40–61 (TDLEAPTQRNDAAPHRAPRRER) are disordered. A disulfide bridge links Cys-107 with Cys-122. N-linked (GlcNAc...) asparagine glycosylation is found at Asn-108 and Asn-138.

The protein belongs to the Wnt family. Post-translationally, palmitoleoylated by porcupine. The lipid group functions as a sorting signal, targeting the ligand to polarized vesicles that transport wg to unique sites at the cell surface. Depalmitoleoylated by notum, leading to inhibit Wnt signaling pathway.

The protein resides in the secreted. It is found in the extracellular space. The protein localises to the extracellular matrix. Its function is as follows. Segment polarity protein. Binds to the frizzled seven-transmembrane receptors. This protein is probably a growth factor. The polypeptide is Protein wingless (WG) (Manduca sexta (Tobacco hawkmoth)).